A 177-amino-acid polypeptide reads, in one-letter code: Large ribosomal subunit protein uL6 (177 aa).

The protein belongs to the universal ribosomal protein uL6 family. Part of the 50S ribosomal subunit.

Functionally, this protein binds to the 23S rRNA, and is important in its secondary structure. It is located near the subunit interface in the base of the L7/L12 stalk, and near the tRNA binding site of the peptidyltransferase center. In Aeromonas hydrophila subsp. hydrophila (strain ATCC 7966 / DSM 30187 / BCRC 13018 / CCUG 14551 / JCM 1027 / KCTC 2358 / NCIMB 9240 / NCTC 8049), this protein is Large ribosomal subunit protein uL6.